The sequence spans 310 residues: Cytosolic Fe-S cluster assembly factor Nubp1 homolog (310 aa).

[4Fe-4S] cluster-binding residues include C9, C23, C26, and C32. 63 to 70 (GKGGVGKS) lines the ATP pocket. Residues C240 and C243 each coordinate [4Fe-4S] cluster.

The protein belongs to the Mrp/NBP35 ATP-binding proteins family. NUBP1/NBP35 subfamily. As to quaternary structure, heterotetramer of 2 Nubp1 and 2 Nubp2 chains. Requires [4Fe-4S] cluster as cofactor.

It localises to the cytoplasm. Functionally, component of the cytosolic iron-sulfur (Fe/S) protein assembly (CIA) machinery. Required for maturation of extramitochondrial Fe-S proteins. The Nubp1-Nubp2 heterotetramer forms a Fe-S scaffold complex, mediating the de novo assembly of an Fe-S cluster and its transfer to target apoproteins. This chain is Cytosolic Fe-S cluster assembly factor Nubp1 homolog, found in Drosophila mojavensis (Fruit fly).